An 88-amino-acid chain; its full sequence is Small ribosomal subunit protein uS17 (88 aa).

Belongs to the universal ribosomal protein uS17 family. Part of the 30S ribosomal subunit.

In terms of biological role, one of the primary rRNA binding proteins, it binds specifically to the 5'-end of 16S ribosomal RNA. The protein is Small ribosomal subunit protein uS17 of Ligilactobacillus salivarius (strain UCC118) (Lactobacillus salivarius).